Reading from the N-terminus, the 2090-residue chain is Nuclear pore complex protein Nup214 (2090 aa).

Glycine 2 carries the post-translational modification N-acetylglycine. Position 30 is a phosphoserine (serine 30). Blade repeat units lie at residues 41 to 93 (LLAV…PMKF), 94 to 150 (PIHH…DAGG), 151 to 193 (MVID…PSTV), 194 to 239 (AVTS…ESDH), 240 to 303 (PVRV…ERQH), 304 to 359 (HYYL…KSDD), and 360 to 404 (SLPM…FYMI). A seven-bladed beta propeller region spans residues 41–404 (LLAVSNKYGL…DGVLCPFYMI (364 aa)). A 44 X 2 AA repeats of F-G region spans residues 236–1418 (ESDHPVRVLD…AVFGSLPVTS (1183 aa)). Threonine 416 carries the post-translational modification Phosphothreonine. Phosphoserine occurs at positions 421, 430, and 433. The segment at 422–460 (LEGERQPKSPGSTPTTPTSSQAPQKLDASAAAAPASLPP) is disordered. Positions 429–441 (KSPGSTPTTPTSS) are enriched in low complexity. Phosphothreonine is present on residues threonine 434, threonine 437, and threonine 439. The (Microbial infection) Binds human adenovirus 5 (HAdV-5) protein L3 (hexon) stretch occupies residues 450-586 (SAAAAPASLP…PPSTSAVKVN (137 aa)). Residues 481–2076 (VFSFGSSSLK…GSGTGGFSFG (1596 aa)) are 11 X 5 AA approximate repeats. Copy 1 of the repeat occupies 484-485 (FG). Composition is skewed to low complexity over residues 489 to 513 (LKSS…KAAP) and 524 to 536 (PPSK…TPAA). The disordered stretch occupies residues 489–536 (LKSSATVTGEPPSYSSGSDSSKAAPGPGPSTFSFVPPSKASLAPTPAA). Repeat unit 2 spans residues 548–549 (FG). 2 stretches are compositionally biased toward low complexity: residues 597-629 (STPV…HPTP) and 637-658 (VPLK…SSSP). The interval 597-700 (STPVSSSQSA…KQGHQWKDSD (104 aa)) is disordered. A phosphoserine mark is found at serine 651, serine 657, and serine 666. Threonine 670 carries the phosphothreonine modification. A Phosphoserine modification is found at serine 678. Positions 680 to 1209 (QAKSLQPAVA…VTSTPSASGQ (530 aa)) form a coiled coil. The span at 691-700 (KQGHQWKDSD) shows a compositional bias: basic and acidic residues. Leucine-zipper stretches follow at residues 740 to 768 (LRTE…ISSL) and 861 to 882 (LANN…VDSL). The residue at position 760 (serine 760) is a Phosphoserine. 4 positions are modified to phosphoserine: serine 940, serine 970, serine 974, and serine 989. The disordered stretch occupies residues 987–1009 (TSSVSQSLESEDARTSCKDDEAV). Positions 997–1007 (EDARTSCKDDE) are enriched in basic and acidic residues. Threonine 1021 is subject to Phosphothreonine. Serine 1023, serine 1045, serine 1056, and serine 1081 each carry phosphoserine. The span at 1128–1149 (LKNNPATPSTAMGSSVPYSTAK) shows a compositional bias: polar residues. The disordered stretch occupies residues 1128–1152 (LKNNPATPSTAMGSSVPYSTAKTPH). Residues threonine 1134, threonine 1150, and threonine 1156 each carry the phosphothreonine modification. Composition is skewed to polar residues over residues 1168-1188 (LINS…SSGD) and 1199-1213 (AVTS…FSKP). The tract at residues 1168–1213 (LINSLKPSGPTPASGQLSSGDKASGTAKIETAVTSTPSASGQFSKP) is disordered. Position 1181 is a phosphoserine (serine 1181). Repeat 3 spans residues 1225-1226 (FG). Polar residues-rich tracts occupy residues 1234–1254 (SNFT…QPDA) and 1273–1285 (PPSG…NTTP). Disordered regions lie at residues 1234-1316 (SNFT…PPSK) and 1337-1408 (LRVG…TSST). Residues 1288 to 1299 (PAASSSRPVAPS) are compositionally biased toward low complexity. The segment covering 1301–1310 (TALSTTSSKL) has biased composition (polar residues). Threonine 1312 carries the phosphothreonine modification. Polar residues predominate over residues 1347–1368 (KPTNKASSTSLTSTQPTKTSGV). At serine 1353 the chain carries Phosphoserine. Low complexity predominate over residues 1386–1408 (PPVTSSATTTSVAPPAATSTSST). The segment at 1409–2084 (AVFGSLPVTS…FGSNNSSVQG (676 aa)) is 18 X 4 AA approximate repeats. A run of 4 repeats spans residues 1411 to 1412 (FG), 1427 to 1428 (FG), 1441 to 1442 (FG), and 1473 to 1474 (FG). An 11 X 3 AA approximate repeats region spans residues 1427–2085 (FGGTSLSAGK…GSNNSSVQGF (659 aa)). The span at 1438–1450 (SFSFGSQQTNSTV) shows a compositional bias: polar residues. Residues 1438-1467 (SFSFGSQQTNSTVPPSAPPPTTAATPLPTS) form a disordered region. 2 stretches are compositionally biased toward low complexity: residues 1479 to 1489 (SATTPSLPMSA) and 1508 to 1527 (SEVS…AQLP). The tract at residues 1479–1539 (SATTPSLPMS…PPQTSDSVKK (61 aa)) is disordered. Lysine 1538 is covalently cross-linked (Glycyl lysine isopeptide (Lys-Gly) (interchain with G-Cter in SUMO2)). 18 consecutive repeat copies span residues 1635-1636 (FG), 1674-1675 (FG), 1686-1687 (FG), 1713-1714 (FG), 1721-1722 (FG), 1726-1727 (FG), 1732-1733 (FG), 1756-1757 (FG), 1772-1773 (FG), 1786-1787 (FG), 1798-1799 (FG), 1806-1807 (FG), 1812-1813 (FG), 1819-1820 (FG), 1842-1843 (FG), 1851-1852 (FG), 1862-1863 (FG), and 1874-1875 (FG). Residues 1884–1903 (GFFSGLGGKPSQDAANKNPF) are disordered. 5 tandem repeats follow at residues 1910 to 1911 (FG), 1922 to 1923 (FG), 1930 to 1931 (FG), 1938 to 1939 (FG), and 1959 to 1960 (FG). Residue serine 1963 is modified to Phosphoserine. 3 repeat units span residues 1970 to 1971 (FG), 1976 to 1977 (FG), and 1982 to 1983 (FG). Serine 1985 carries the phosphoserine modification. A run of 11 repeats spans residues 1988-1989 (FG), 1994-1995 (FG), 2012-2013 (FG), 2024-2025 (FG), 2026-2027 (FG), 2035-2036 (FG), 2046-2047 (FG), 2056-2057 (FG), 2066-2067 (FG), 2075-2076 (FG), and 2085-2086 (FG).

Homodimer. Part of the nuclear pore complex (NPC). Interacts with NUP88. Interacts with ZFP36; this interaction increases upon lipopolysaccharide (LPS) stimulation. Interacts with DDX19. Interacts with XPO1. Interacts with XPO5. In terms of assembly, (Microbial infection) Interacts with human herpes virus 1 (HHV-1) protein UL25; this interaction might be essential to the capsid docking onto the host nuclear pore. As to quaternary structure, (Microbial infection) Interacts (via N-terminus) with human adenovirus 5 (HAdV-5) protein L3 (hexon); this interaction might be essential for the release of the virus genome to the nucleus. Post-translationally, probably glycosylated as it reacts with wheat germ agglutinin (WGA). In terms of tissue distribution, expressed in thymus, spleen, bone marrow, kidney, brain and testis, but hardly in all other tissues or in whole embryos during development.

The protein resides in the nucleus. Its subcellular location is the nuclear pore complex. Part of the nuclear pore complex. Has a critical role in nucleocytoplasmic transport. May serve as a docking site in the receptor-mediated import of substrates across the nuclear pore complex. Functionally, (Microbial infection) Required for capsid disassembly of the human adenovirus 5 (HadV-5) leading to release of the viral genome to the nucleus (in vitro). This is Nuclear pore complex protein Nup214 (NUP214) from Homo sapiens (Human).